Consider the following 128-residue polypeptide: Protein BEX1 (128 aa).

The segment at 1–55 is disordered; it reads MESKDQGAKNLNMENDHQKKEEKEEKPQDTIKREPVVAPTFEAGKNCAPRGGRRR. Residues 14–35 show a composition bias toward basic and acidic residues; that stretch reads ENDHQKKEEKEEKPQDTIKREP. The residue at position 105 (S105) is a Phosphoserine; by PKB/AKT1. The tract at residues 107 to 128 is disordered; that stretch reads SLRAVSTDPPHHDHHDEFCLMP. The span at 115 to 128 shows a compositional bias: basic and acidic residues; sequence PPHHDHHDEFCLMP. Residues 117–121 form a his cluster region; sequence HHDHH. C125 contributes to the Zn(2+) binding site.

The protein belongs to the BEX family. As to quaternary structure, interacts with neurotrophin receptor p75NTR/NGFR. Interacts with OMP. Post-translationally, phosphorylated. Phosphorylation of Ser-105 protects it from the proteasome. Ubiquitinated. Degraded by the proteasome. In terms of tissue distribution, expressed in the central nervous system. Expressed in Schwann cells from newborn sciatic nerve.

Its subcellular location is the nucleus. It localises to the cytoplasm. Functionally, signaling adapter molecule involved in p75NTR/NGFR signaling. Plays a role in cell cycle progression and neuronal differentiation. Inhibits neuronal differentiation in response to nerve growth factor (NGF). May act as a link between the cell cycle and neurotrophic factor signaling, possibly by functioning as an upstream modulator of receptor signaling, coordinating biological responses to external signals with internal cellular states. In absence of reductive stress, acts as a pseudosubstrate for the CRL2(FEM1B) complex: associates with FEM1B via zinc, thereby preventing association between FEM1B and its substrates. The protein is Protein BEX1 (Bex1) of Rattus norvegicus (Rat).